A 346-amino-acid chain; its full sequence is MSEAARLIAPEKRGEDLDATMRPQTLDEFTGQAEARANLKIFIEAARNRGEALDHVLFVGPPGLGKTTLAQIMAKELGVNFRSTSGPVIAKAGDLAALLTNLEERDVLFIDEIHRLNPAVEEILYPAMEDFQLDLIIGEGPAARSVKIDLAKFTLVAATTRLGLLTTPLRDRFGIPVRLNFYTVEELELIVRRGARLMGLGMTDEGAREIARRARGTPRIAGRLLRRVRDFAEVARAEAVTLKIADEALTRLLVDSMGLDQLDRRYLTMIAQNFGGGPVGIETIAAGLSEPRDAIEDIIEPYLIQQGFIQRTPRGRVLTANAWKHLGLNPPRDVEASQFRLTLEDD.

The tract at residues 1-182 is large ATPase domain (RuvB-L); that stretch reads MSEAARLIAP…FGIPVRLNFY (182 aa). ATP is bound by residues Arg22, Gly63, Lys66, Thr67, Thr68, 129-131, Arg172, Tyr182, and Arg219; that span reads EDF. Thr67 contributes to the Mg(2+) binding site. Positions 183 to 253 are small ATPAse domain (RuvB-S); sequence TVEELELIVR…IADEALTRLL (71 aa). The head domain (RuvB-H) stretch occupies residues 256–346; that stretch reads SMGLDQLDRR…SQFRLTLEDD (91 aa). 3 residues coordinate DNA: Arg292, Arg311, and Arg316.

It belongs to the RuvB family. As to quaternary structure, homohexamer. Forms an RuvA(8)-RuvB(12)-Holliday junction (HJ) complex. HJ DNA is sandwiched between 2 RuvA tetramers; dsDNA enters through RuvA and exits via RuvB. An RuvB hexamer assembles on each DNA strand where it exits the tetramer. Each RuvB hexamer is contacted by two RuvA subunits (via domain III) on 2 adjacent RuvB subunits; this complex drives branch migration. In the full resolvosome a probable DNA-RuvA(4)-RuvB(12)-RuvC(2) complex forms which resolves the HJ.

The protein resides in the cytoplasm. The enzyme catalyses ATP + H2O = ADP + phosphate + H(+). The RuvA-RuvB-RuvC complex processes Holliday junction (HJ) DNA during genetic recombination and DNA repair, while the RuvA-RuvB complex plays an important role in the rescue of blocked DNA replication forks via replication fork reversal (RFR). RuvA specifically binds to HJ cruciform DNA, conferring on it an open structure. The RuvB hexamer acts as an ATP-dependent pump, pulling dsDNA into and through the RuvAB complex. RuvB forms 2 homohexamers on either side of HJ DNA bound by 1 or 2 RuvA tetramers; 4 subunits per hexamer contact DNA at a time. Coordinated motions by a converter formed by DNA-disengaged RuvB subunits stimulates ATP hydrolysis and nucleotide exchange. Immobilization of the converter enables RuvB to convert the ATP-contained energy into a lever motion, pulling 2 nucleotides of DNA out of the RuvA tetramer per ATP hydrolyzed, thus driving DNA branch migration. The RuvB motors rotate together with the DNA substrate, which together with the progressing nucleotide cycle form the mechanistic basis for DNA recombination by continuous HJ branch migration. Branch migration allows RuvC to scan DNA until it finds its consensus sequence, where it cleaves and resolves cruciform DNA. The polypeptide is Holliday junction branch migration complex subunit RuvB (Rhizobium meliloti (strain 1021) (Ensifer meliloti)).